A 255-amino-acid polypeptide reads, in one-letter code: Phycoerythrobilin:ferredoxin oxidoreductase (255 aa).

Belongs to the HY2 family.

The catalysed reaction is (3Z)-phycoerythrobilin + oxidized 2[4Fe-4S]-[ferredoxin] = 15,16-dihydrobiliverdin + reduced 2[4Fe-4S]-[ferredoxin] + 2 H(+). Functionally, catalyzes the two-electron reduction of the C2 and C3(1) diene system of 15,16-dihydrobiliverdin. The chain is Phycoerythrobilin:ferredoxin oxidoreductase (pebB) from Nostoc punctiforme (strain ATCC 29133 / PCC 73102).